Here is a 188-residue protein sequence, read N- to C-terminus: dTTP/UTP pyrophosphatase (188 aa).

The active-site Proton acceptor is Asp-70.

It belongs to the Maf family. YhdE subfamily. Requires a divalent metal cation as cofactor.

Its subcellular location is the cytoplasm. The enzyme catalyses dTTP + H2O = dTMP + diphosphate + H(+). The catalysed reaction is UTP + H2O = UMP + diphosphate + H(+). Nucleoside triphosphate pyrophosphatase that hydrolyzes dTTP and UTP. May have a dual role in cell division arrest and in preventing the incorporation of modified nucleotides into cellular nucleic acids. This chain is dTTP/UTP pyrophosphatase, found in Clostridium botulinum (strain Eklund 17B / Type B).